The chain runs to 223 residues: Charged multivesicular body protein 3 (223 aa).

Gly2 carries N-myristoyl glycine lipidation. Residues 2–113 (GLFGKTQEKP…LQKSTEVMKA (112 aa)) form an intramolecular interaction with C-terminus region. A coiled-coil region spans residues 22–54 (KIRKEMRVVDRQIRDIQREEEKVKRSVKDAAKK). Important for autoinhibitory function stretches follow at residues 59 to 64 (VCVVLA) and 168 to 169 (IL). The stretch at 149–223 (ESMDDQEEME…MQSRLATLRS (75 aa)) forms a coiled coil. The tract at residues 151–221 (MDDQEEMEEA…EAMQSRLATL (71 aa)) is intramolecular interaction with N-terminus. The interval 151-223 (MDDQEEMEEA…MQSRLATLRS (73 aa)) is interaction with VPS4A. Lys179 is covalently cross-linked (Glycyl lysine isopeptide (Lys-Gly) (interchain with G-Cter in ubiquitin)). The tract at residues 180 to 223 (APSKVTDALPEPEPAGAMAASEGDEEDDEEDLEAMQSRLATLRS) is disordered. Interaction with STAMBP stretches follow at residues 196-223 (AMAA…TLRS), 204-208 (EEDDE), and 222-223 (RS). Ser200 carries the phosphoserine modification. Residues 201-212 (EGDEEDDEEDLE) carry the MIT-interacting motif motif. A compositionally biased stretch (acidic residues) spans 201 to 212 (EGDEEDDEEDLE).

This sequence belongs to the SNF7 family. In terms of assembly, probable core component of the endosomal sorting required for transport complex III (ESCRT-III). ESCRT-III components are thought to multimerize to form a flat lattice on the perimeter membrane of the endosome. Several assembly forms of ESCRT-III may exist that interact and act sequentially. Forms a metastable monomer in solution; its core structure (without part of the putative autoinhibitory C-terminal acidic region) oligomerizes into a flat lattice via two different dimerization interfaces. In vitro, heteromerizes with CHMP2A (but not CHMP4) to form helical tubular structures that expose membrane-interacting sites on the outside whereas VPS4B can associate on the inside of the tubule. May interact with IGFBP7; the relevance of such interaction however remains unclear. Interacts with CHMP2A. Interacts with CHMP4A; the interaction requires the release of CHMP4A autoinhibition. Interacts with VPS4A. Interacts with STAMBP; the interaction appears to relieve the autoinhibition of CHMP3. Interacts with VTA1.

The protein localises to the cytoplasm. Its subcellular location is the cytosol. It is found in the membrane. The protein resides in the endosome. It localises to the late endosome membrane. In terms of biological role, probable core component of the endosomal sorting required for transport complex III (ESCRT-III) which is involved in multivesicular bodies (MVBs) formation and sorting of endosomal cargo proteins into MVBs. MVBs contain intraluminal vesicles (ILVs) that are generated by invagination and scission from the limiting membrane of the endosome and mostly are delivered to lysosomes enabling degradation of membrane proteins, such as stimulated growth factor receptors, lysosomal enzymes and lipids. The MVB pathway appears to require the sequential function of ESCRT-O, -I,-II and -III complexes. ESCRT-III proteins mostly dissociate from the invaginating membrane before the ILV is released. The ESCRT machinery also functions in topologically equivalent membrane fission events, such as the terminal stages of cytokinesis. ESCRT-III proteins are believed to mediate the necessary vesicle extrusion and/or membrane fission activities, possibly in conjunction with the AAA ATPase VPS4. Selectively binds to phosphatidylinositol 3,5-bisphosphate PtdIns(3,5)P2 and PtdIns(3,4)P2 in preference to other phosphoinositides tested. Involved in late stages of cytokinesis. Plays a role in endosomal sorting/trafficking of EGF receptor. The polypeptide is Charged multivesicular body protein 3 (Chmp3) (Rattus norvegicus (Rat)).